The primary structure comprises 475 residues: Amino acid permease 8 (475 aa).

The interval 1–22 (MDAYNNPSAVESGDAAVKSVDD) is disordered. At 1-31 (MDAYNNPSAVESGDAAVKSVDDDGREKRTGT) the chain is on the cytoplasmic side. Helical transmembrane passes span 32-52 (FWTA…LSLA) and 53-73 (WAIA…FAII). The Cytoplasmic portion of the chain corresponds to 74–120 (TYYTSTLLADCYRSPDSITGTRNYNYMGVVRSYLGGKKVQLCGVAQY). A helical membrane pass occupies residues 121–141 (VNLVGVTIGYTITASISLVAI). Topologically, residues 142-157 (GKSNCYHDKGHKAKCS) are extracellular. Residues 158–178 (VSNYPYMAAFGIVQIILSQLP) traverse the membrane as a helical segment. The Cytoplasmic portion of the chain corresponds to 179–185 (NFHKLSF). A helical membrane pass occupies residues 186 to 206 (LSIIAAVMSFSYASIGIGLAI). The Extracellular segment spans residues 207–236 (ATVASGKIGKTELTGTVIGVDVTASEKVWK). A helical transmembrane segment spans residues 237–257 (LFQAIGDIAFSYAFTTILIEI). Residues 258-276 (QDTLRSSPPENKVMKRASL) lie on the Cytoplasmic side of the membrane. Residues 277–297 (VGVSTTTVFYILCGCIGYAAF) form a helical membrane-spanning segment. Topologically, residues 298–314 (GNQAPGDFLTDFGFYEP) are extracellular. The chain crosses the membrane as a helical span at residues 315 to 335 (YWLIDFANACIALHLIGAYQV). Residues 336 to 378 (YAQPFFQFVEENCNKKWPQSNFINKEYSSKVPLLGKCRVNLFR) are Cytoplasmic-facing. Residues 379 to 398 (LVWRTCYVVLTTFVAMIFPF) traverse the membrane as a helical segment. Over 399–401 (FNA) the chain is Extracellular. Residues 402–424 (ILGLLGAFAFWPLTVYFPVAMHI) traverse the membrane as a helical segment. At 425–441 (AQAKVKKYSRRWLALNL) the chain is on the cytoplasmic side. A helical transmembrane segment spans residues 442-462 (LVLVCLIVSALAAVGSIIGLI). Over 463 to 475 (NSVKSYKPFKNLD) the chain is Extracellular.

The protein belongs to the amino acid/polyamine transporter 2 family. Amino acid/auxin permease (AAAP) (TC 2.A.18.2) subfamily. As to expression, expressed in flower buds, siliques, developing seeds and funiculi.

The protein localises to the cell membrane. Its function is as follows. Amino acid-proton symporter. Stereospecific transporter with a broad specificity for glutamate, aspartate and neutral and acidic amino acids. This Arabidopsis thaliana (Mouse-ear cress) protein is Amino acid permease 8 (AAP8).